A 320-amino-acid polypeptide reads, in one-letter code: Olfactory receptor 13C8 (320 aa).

Residues 1 to 25 (MERTNDSTSTEFFLVGLSAHPKLQT) are Extracellular-facing. Asn5 is a glycosylation site (N-linked (GlcNAc...) asparagine). A helical membrane pass occupies residues 26 to 46 (VFFVLILWMYLMILLGNGVLI). Topologically, residues 47–54 (SVIIFDSH) are cytoplasmic. Residues 55–75 (LHTPMYFFLCNLSFLDVCYTS) traverse the membrane as a helical segment. Residues 76 to 99 (SSVPLILASFLAVKKKVSFSGCMV) are Extracellular-facing. Cys97 and Cys189 are joined by a disulfide. A helical membrane pass occupies residues 100–120 (QMFISFAMGATECMILGTMAL). Residues 121–139 (DRYVAICYPLRYPVIMSKG) lie on the Cytoplasmic side of the membrane. A helical transmembrane segment spans residues 140–160 (AYVAMAAGSWVTGLVDSVVQT). Over 161 to 197 (AFAMQLPFCANNVIKHFVCEILAILKLACADISINVI) the chain is Extracellular. The chain crosses the membrane as a helical span at residues 198–217 (SMTGSNLIVLVIPLLVISIS). At 218-237 (YIFIVATILRIPSTEGKHKA) the chain is on the cytoplasmic side. Residues 238–258 (FSTCSAHLTVVIIFYGTIFFM) form a helical membrane-spanning segment. Over 259 to 277 (YAKPESKASVDSGNEDIIE) the chain is Extracellular. Residues 278–298 (ALISLFYGVMTPMLNPLIYSL) form a helical membrane-spanning segment. At 299–320 (RNKDVKAAVKNILCRKNFSDGK) the chain is on the cytoplasmic side.

Belongs to the G-protein coupled receptor 1 family.

Its subcellular location is the cell membrane. Its function is as follows. Odorant receptor. The protein is Olfactory receptor 13C8 (OR13C8) of Homo sapiens (Human).